Consider the following 384-residue polypeptide: MKFVDEVEIRVDAGDGGNGCISFRREKYIPKGGPDGGDGGDGGDVYLEADENLNTLIDYRFERFHKAERGKNGMGKNCTGRRGNDIVLPVPPGTRATDIDTGEVLGDLTKHGQRLMVAKGGFHGLGNTRFKSSINRAPRQKTDGTPGEVRPLKLELMLLADVGLLGMPNAGKSTFIRSVSAARPKVADYPFTTLIPNLGVVRPAPHQSFVIADIPGLIEGAAEGAGLGIQFLKHLERCRLLLHLVDLAPFDETDPAEQARIIINELEKYSPKLAEKPRWLVINKVDLLLDEEVQEKVDELVKSLNWDGPVFQIAALEGRGSDALCREVMSYLETLPAPDTEQHEEADPVEFMWDTYHEEVLEEEMDDEDDDDDDDHDVEVIYQK.

Positions 1–159 constitute an Obg domain; sequence MKFVDEVEIR…RPLKLELMLL (159 aa). Residues 72 to 94 form a disordered region; sequence NGMGKNCTGRRGNDIVLPVPPGT. The OBG-type G domain occupies 160-333; sequence ADVGLLGMPN…LCREVMSYLE (174 aa). GTP contacts are provided by residues 166–173, 191–195, 213–216, 283–286, and 314–316; these read GMPNAGKS, FTTLI, DIPG, NKVD, and AAL. Ser-173 and Thr-193 together coordinate Mg(2+). Positions 358-384 are disordered; sequence EEVLEEEMDDEDDDDDDDHDVEVIYQK. Over residues 360–377 the composition is skewed to acidic residues; sequence VLEEEMDDEDDDDDDDHD.

Belongs to the TRAFAC class OBG-HflX-like GTPase superfamily. OBG GTPase family. As to quaternary structure, monomer. Mg(2+) is required as a cofactor.

Its subcellular location is the cytoplasm. Functionally, an essential GTPase which binds GTP, GDP and possibly (p)ppGpp with moderate affinity, with high nucleotide exchange rates and a fairly low GTP hydrolysis rate. Plays a role in control of the cell cycle, stress response, ribosome biogenesis and in those bacteria that undergo differentiation, in morphogenesis control. This Idiomarina loihiensis (strain ATCC BAA-735 / DSM 15497 / L2-TR) protein is GTPase Obg.